A 242-amino-acid polypeptide reads, in one-letter code: Leucyl/phenylalanyl-tRNA--protein transferase (242 aa).

It belongs to the L/F-transferase family.

The protein resides in the cytoplasm. The enzyme catalyses N-terminal L-lysyl-[protein] + L-leucyl-tRNA(Leu) = N-terminal L-leucyl-L-lysyl-[protein] + tRNA(Leu) + H(+). It catalyses the reaction N-terminal L-arginyl-[protein] + L-leucyl-tRNA(Leu) = N-terminal L-leucyl-L-arginyl-[protein] + tRNA(Leu) + H(+). The catalysed reaction is L-phenylalanyl-tRNA(Phe) + an N-terminal L-alpha-aminoacyl-[protein] = an N-terminal L-phenylalanyl-L-alpha-aminoacyl-[protein] + tRNA(Phe). Functionally, functions in the N-end rule pathway of protein degradation where it conjugates Leu, Phe and, less efficiently, Met from aminoacyl-tRNAs to the N-termini of proteins containing an N-terminal arginine or lysine. The polypeptide is Leucyl/phenylalanyl-tRNA--protein transferase (Alcanivorax borkumensis (strain ATCC 700651 / DSM 11573 / NCIMB 13689 / SK2)).